An 894-amino-acid chain; its full sequence is Sorting nexin-14 (894 aa).

The 175-residue stretch at 78 to 252 (SSKVDASLSE…LLIIFIDDSP (175 aa)) folds into the PXA domain. Residues 284–416 (ELKQIREQQD…CHSDEYFRQL (133 aa)) enclose the RGS domain. Serine 496 is subject to Phosphoserine. In terms of domain architecture, PX spans 518 to 638 (PYVDFFEDPS…DFLSPNGGET (121 aa)).

This sequence belongs to the sorting nexin family.

Its subcellular location is the cytoplasm. It is found in the cell projection. The protein localises to the dendrite. Plays a role in maintaining normal neuronal excitability and synaptic transmission. May be involved in several stages of intracellular trafficking. The chain is Sorting nexin-14 (SNX14) from Pongo abelii (Sumatran orangutan).